Consider the following 160-residue polypeptide: MAKQKKHPTGTIAQNKKARHDYFIEHKFEAGLVLAGWEVKSLRASKLQLVDSYVLLKDGEAWLLGSHITPLMTASTHVIADPVRTRKLLLNRRELDKLAAAVQQKGYACVCLSWYWSKHMVKCEIALGKGKKEYDKRDTERERDAGRELQRAVRNKGKED.

Residues 131-160 (KKEYDKRDTERERDAGRELQRAVRNKGKED) form a disordered region.

Belongs to the SmpB family.

It is found in the cytoplasm. In terms of biological role, required for rescue of stalled ribosomes mediated by trans-translation. Binds to transfer-messenger RNA (tmRNA), required for stable association of tmRNA with ribosomes. tmRNA and SmpB together mimic tRNA shape, replacing the anticodon stem-loop with SmpB. tmRNA is encoded by the ssrA gene; the 2 termini fold to resemble tRNA(Ala) and it encodes a 'tag peptide', a short internal open reading frame. During trans-translation Ala-aminoacylated tmRNA acts like a tRNA, entering the A-site of stalled ribosomes, displacing the stalled mRNA. The ribosome then switches to translate the ORF on the tmRNA; the nascent peptide is terminated with the 'tag peptide' encoded by the tmRNA and targeted for degradation. The ribosome is freed to recommence translation, which seems to be the essential function of trans-translation. This is SsrA-binding protein from Pseudomonas fluorescens (strain Pf0-1).